We begin with the raw amino-acid sequence, 202 residues long: Hydrogenase expression/formation protein HoxM (202 aa).

Residues Glu15, Asp61, and His92 each contribute to the Ni(2+) site.

The protein belongs to the peptidase A31 family.

Its function is as follows. Absolutely required for hydrogenase activity. Mediates the attachment of hydrogenase to the bacterial membrane; attachment is a requirement for enzymatic activity. The sequence is that of Hydrogenase expression/formation protein HoxM (hoxM) from Cupriavidus necator (strain ATCC 17699 / DSM 428 / KCTC 22496 / NCIMB 10442 / H16 / Stanier 337) (Ralstonia eutropha).